Reading from the N-terminus, the 247-residue chain is Bax inhibitor 1 (247 aa).

Met1 carries the N-acetylmethionine modification. Transmembrane regions (helical) follow at residues 58–78, 92–112, 118–138, 145–165, 173–193, and 212–232; these read VLWN…MIWL, LLFV…KVAI, ILIT…AAAM, YLYL…LQFA, ASIF…YMVV, and HSLT…IIML.

It belongs to the BI1 family. As to quaternary structure, interacts (via C-terminus) with calmodulin, CYTB5-B and CYTB5-D. Interacts indirectly with FAH1 via CYTB5-D. As to expression, expressed in root tips, root vasculature, flower tissues, including stamens and sepals, and in the base of siliques. Not detected in mature leaves.

It is found in the endoplasmic reticulum membrane. Functionally, suppressor of apoptosis. Modulator of endoplasmic reticulum stress-mediated programmed cell death. Involved in methyl jasmonate-induced leaf senescence through regulating cytoplasmic calcium level. This chain is Bax inhibitor 1 (BI-1), found in Arabidopsis thaliana (Mouse-ear cress).